Reading from the N-terminus, the 383-residue chain is DNA-directed RNA polymerase subunit alpha (383 aa).

The interval 1–240 (MEKKTGLIQF…NLFHQISPPL (240 aa)) is alpha N-terminal domain (alpha-NTD). The segment at 306–383 (IDKQMNDSVN…RFNMELLPTK (78 aa)) is alpha C-terminal domain (alpha-CTD).

Belongs to the RNA polymerase alpha chain family. In plastids the minimal PEP RNA polymerase catalytic core is composed of four subunits: alpha, beta, beta', and beta''. When a (nuclear-encoded) sigma factor is associated with the core the holoenzyme is formed, which can initiate transcription.

Its subcellular location is the plastid. It is found in the chloroplast. The catalysed reaction is RNA(n) + a ribonucleoside 5'-triphosphate = RNA(n+1) + diphosphate. Its function is as follows. DNA-dependent RNA polymerase catalyzes the transcription of DNA into RNA using the four ribonucleoside triphosphates as substrates. In Staurastrum punctulatum (Green alga), this protein is DNA-directed RNA polymerase subunit alpha.